The following is a 272-amino-acid chain: Heat stress transcription factor A-7a (272 aa).

Residues 1–26 (MMNPFLPEGCDPPPPPQPMEGLHENA) form a disordered region. The DNA-binding element occupies 27-121 (PPPFLTKTFE…LLKNIKRRNP (95 aa)). Residues 132 to 186 (ACNELRREKQVLMMEIVSLRQQQQTTKSYIKAMEQRIEGTERKQRQMMSFLARAM) form a hydrophobic repeat HR-A/B region. Residues 201–216 (KKIKELEDNESAKRKR) carry the Bipartite nuclear localization signal motif. Basic and acidic residues predominate over residues 203–212 (IKELEDNESA). Positions 203–223 (IKELEDNESAKRKRGSSSMSE) are disordered. Residues 256–265 (DGFWEELLSD) carry the AHA motif.

The protein belongs to the HSF family. Class A subfamily. In terms of assembly, homotrimer. Post-translationally, exhibits temperature-dependent phosphorylation.

It is found in the nucleus. Its function is as follows. Transcriptional activator that specifically binds DNA sequence 5'-AGAAnnTTCT-3' known as heat shock promoter elements (HSE). In Arabidopsis thaliana (Mouse-ear cress), this protein is Heat stress transcription factor A-7a (HSFA7A).